We begin with the raw amino-acid sequence, 266 residues long: MRLIPLTTAEQVGKWAARHIVNRINAFKPTADRPFVLGLPTGGTPMTTYKALVEMHKAGQVSFKHVVTFNMDEYVGLPKEHPESYYSFMHRNFFDHVDIPAENINLLNGNAPDIEAECRQYEEKIRSYGKIHLFMGGVGNDGHIAFNEPASSLASRTRIKTLTHDTRVANSRFFDNDVNQVPKYALTVGVGTLLDAEEVMILVLGSQKALALQAAVEGCVNHMWTISCLQLHPKAIMVCDEPSTMELKVKTLRYFNELEAENIKGL.

The active-site Proton acceptor; for enolization step is the aspartate 72. Catalysis depends on aspartate 141, which acts as the For ring-opening step. The active-site Proton acceptor; for ring-opening step is histidine 143. The active-site For ring-opening step is glutamate 148.

It belongs to the glucosamine/galactosamine-6-phosphate isomerase family. NagB subfamily. Homohexamer; trimer of disulfide-linked dimers.

The enzyme catalyses alpha-D-glucosamine 6-phosphate + H2O = beta-D-fructose 6-phosphate + NH4(+). Its pathway is amino-sugar metabolism; N-acetylneuraminate degradation; D-fructose 6-phosphate from N-acetylneuraminate: step 5/5. With respect to regulation, allosterically activated by N-acetylglucosamine 6-phosphate (GlcNAc6P). In terms of biological role, catalyzes the reversible isomerization-deamination of glucosamine 6-phosphate (GlcN6P) to form fructose 6-phosphate (Fru6P) and ammonium ion. This chain is Glucosamine-6-phosphate deaminase, found in Escherichia coli O6:H1 (strain CFT073 / ATCC 700928 / UPEC).